Here is a 267-residue protein sequence, read N- to C-terminus: MYLELVKKNSVILDKDGNKVKEVELPFIFSFPVRKDIIRRVFLAEFTHSLQPKGRDPMAGKRTSAESFGINLGMARVPRVKNSGEAALAPNTVGGRLTFPPSVDKKLVEEVNDKEKQLAVISALSATADKVFVKARGHVFKDSVSFPIVVTDDIVSLKTASEVEEFLEKIGVYDDVKRVKERIRIRAGKGKMRGRKYKESIGPLIIVHDSNSPIVKAARNIAGVDVVNAKDVSVIHLAPGAHSGRLTIYTETSIKILDERLSKRLVS.

The protein belongs to the universal ribosomal protein uL4 family. Part of the 50S ribosomal subunit.

In terms of biological role, one of the primary rRNA binding proteins, this protein initially binds near the 5'-end of the 23S rRNA. It is important during the early stages of 50S assembly. It makes multiple contacts with different domains of the 23S rRNA in the assembled 50S subunit and ribosome. Its function is as follows. Forms part of the polypeptide exit tunnel. The chain is Large ribosomal subunit protein uL4 from Saccharolobus islandicus (strain Y.N.15.51 / Yellowstone #2) (Sulfolobus islandicus).